Consider the following 750-residue polypeptide: Glutamate carboxypeptidase 2 (750 aa).

Over 1-19 the chain is Cytoplasmic; that stretch reads MWNLLHETDSAVATARRPR. The residue at position 10 (Ser-10) is a Phosphoserine. The helical; Signal-anchor for type II membrane protein transmembrane segment at 20 to 43 threads the bilayer; that stretch reads WLCAGALVLAGGFFLLGFLFGWFI. Residues 44-750 lie on the Extracellular side of the membrane; sequence KSSNEATNIT…AAAETLSEVA (707 aa). Residues Asn-51, Asn-76, Asn-121, Asn-140, Asn-153, and Asn-195 are each glycosylated (N-linked (GlcNAc...) asparagine). Substrate is bound by residues Arg-210 and Asn-257. 2 residues coordinate Ca(2+): Thr-269 and Tyr-272. The interval 274-587 is NAALADase; that stretch reads ANEYAYRRGI…QVRGGMVFEL (314 aa). N-linked (GlcNAc...) asparagine glycosylation is present at Asn-336. Zn(2+) contacts are provided by His-377 and Asp-387. A substrate-binding site is contributed by Glu-424. Glu-424 serves as the catalytic Nucleophile; for NAALADase activity. Position 425 (Glu-425) interacts with Zn(2+). Ca(2+) is bound by residues Glu-433 and Glu-436. Asp-453 lines the Zn(2+) pocket. N-linked (GlcNAc...) asparagine glycans are attached at residues Asn-459 and Asn-476. Residues 517-518, Asn-519, 534-536, Tyr-552, and 552-553 each bind substrate; these read SG, RAR, and YH. Residue His-553 coordinates Zn(2+). Ser-628 acts as the Charge relay system in catalysis. N-linked (GlcNAc...) asparagine glycosylation occurs at Asn-638. Residues Asp-666 and His-689 each act as charge relay system in the active site. 699-700 contributes to the substrate binding site; sequence KY.

The protein belongs to the peptidase M28 family. M28B subfamily. As to quaternary structure, homodimer. Zn(2+) serves as cofactor. Post-translationally, the first two amino acids at the N-terminus of isoform PSMA' appear to be cleaved by limited proteolysis. The N-terminus is blocked. In terms of tissue distribution, highly expressed in prostate epithelium. Detected in urinary bladder, kidney, testis, ovary, fallopian tube, breast, adrenal gland, liver, esophagus, stomach, small intestine, colon and brain (at protein level). Detected in the small intestine, brain, kidney, liver, spleen, colon, trachea, spinal cord and the capillary endothelium of a variety of tumors. Expressed specifically in jejunum brush border membranes. In the brain, highly expressed in the ventral striatum and brain stem. Also expressed in fetal liver and kidney. Isoform PSMA' is the most abundant form in normal prostate. Isoform PSMA-1 is the most abundant form in primary prostate tumors. Isoform PSMA-9 is specifically expressed in prostate cancer.

Its subcellular location is the cell membrane. The protein localises to the cytoplasm. The catalysed reaction is Release of an unsubstituted, C-terminal glutamyl residue, typically from Ac-Asp-Glu or folylpoly-gamma-glutamates.. The NAALADase activity is inhibited by beta-NAAG, quisqualic acid, 2-(phosphonomethyl) pentanedioic acid (PMPA) and EDTA. Activated by cobalt. In terms of biological role, has both folate hydrolase and N-acetylated-alpha-linked-acidic dipeptidase (NAALADase) activity. Has a preference for tri-alpha-glutamate peptides. In the intestine, required for the uptake of folate. In the brain, modulates excitatory neurotransmission through the hydrolysis of the neuropeptide, N-aceylaspartylglutamate (NAAG), thereby releasing glutamate. Involved in prostate tumor progression. Functionally, also exhibits a dipeptidyl-peptidase IV type activity. In vitro, cleaves Gly-Pro-AMC. The protein is Glutamate carboxypeptidase 2 of Homo sapiens (Human).